A 344-amino-acid polypeptide reads, in one-letter code: Putative NAD(P)H nitroreductase MT3217 (344 aa).

Residues 40–44 and Arg326 each bind FMN; that span reads QPWRW.

Belongs to the nitroreductase family. Interacts with human TLR2. Requires FMN as cofactor.

Functionally, stimulates pro-inflammatory cytokine expression via TLR2 signaling pathway. Activation of TLR2 results in the phosphorylation and activation of NF-kappa-B. Also induces TLR2 expression. May influence the innate immune responses to facilitate the survival of M.tuberculosis in the granulomatous microenvironment. In Mycobacterium tuberculosis (strain CDC 1551 / Oshkosh), this protein is Putative NAD(P)H nitroreductase MT3217.